A 314-amino-acid polypeptide reads, in one-letter code: PDCD10 and GCKIII kinases-associated protein 1 (314 aa).

Ser30 is modified (phosphoserine). A disordered region spans residues 36-142; that stretch reads DDTDKLKGKW…TQPFLEGGGT (107 aa). Thr106 bears the Phosphothreonine mark. Positions 107–116 are enriched in polar residues; sequence PQPTGNSSPT. Ser238 and Ser241 each carry phosphoserine. The segment at 267–291 is disordered; the sequence is VDSGNRQEDTHGSDGDGDGEIVDED. The segment covering 271–280 has biased composition (basic and acidic residues); sequence NRQEDTHGSD. Residues 281 to 291 show a composition bias toward acidic residues; sequence GDGDGEIVDED.

As to quaternary structure, interacts with KEAP1; this interaction prevents the ubiquitination of KEAP1 by TRIM25, thus protecting KEAP1 from degradation. Found in association with PDCD10 and members of the STE20 kinases, such as STK24, STK25 and STK26.

The protein localises to the cell membrane. Its function is as follows. Acts as a tumor suppressor. Acts as a tumor suppressor for colorectal cancer cell proliferation by targeting KEAP1/USP17/ELK1/CDK6 axis. In Homo sapiens (Human), this protein is PDCD10 and GCKIII kinases-associated protein 1.